Consider the following 470-residue polypeptide: UDP-N-acetylmuramate--L-alanine ligase (470 aa).

ATP is bound at residue glycine 118–threonine 124.

Belongs to the MurCDEF family.

The protein resides in the cytoplasm. The catalysed reaction is UDP-N-acetyl-alpha-D-muramate + L-alanine + ATP = UDP-N-acetyl-alpha-D-muramoyl-L-alanine + ADP + phosphate + H(+). The protein operates within cell wall biogenesis; peptidoglycan biosynthesis. In terms of biological role, cell wall formation. This is UDP-N-acetylmuramate--L-alanine ligase from Cereibacter sphaeroides (strain ATCC 17025 / ATH 2.4.3) (Rhodobacter sphaeroides).